The primary structure comprises 214 residues: Dimethylamine corrinoid protein 2 (214 aa).

Residues 1–91 (MATKEELIQE…DMPAGAATKK (91 aa)) enclose the B12-binding N-terminal domain. A B12-binding domain is found at 92–214 (LGVIVNGTVE…AVAKAKELLL (123 aa)). His105 serves as a coordination point for methylcob(III)alamin.

It belongs to the methylamine corrinoid protein family.

Its pathway is one-carbon metabolism; methanogenesis from dimethylamine. Acts as a methyl group carrier between MtbB and MtbA. The protein is Dimethylamine corrinoid protein 2 (mtbC2) of Methanosarcina mazei (strain ATCC BAA-159 / DSM 3647 / Goe1 / Go1 / JCM 11833 / OCM 88) (Methanosarcina frisia).